The sequence spans 780 residues: MVNRDAYNELNLNKKSQETNRKPSPLSSYTSISRELDYANQSPFSSNSFSPTELKARTSATFDVRSASTSPINASDFHKYSHDPFQRLFKAKGNASFSKTKSFPSSVTYSPSEETFPLTSGMNKSVHEYPFTLSESAISSSHKSSIPERRNFDSSVSVSNPLLHWNNVDTLLRDGSLENVNNSRQDQFLPYKTFSSTISNSDFLHRESSFSSLIDEESKLASLRNLNINDRPPLPVLKNSERNLLHRQLLSNHPFFSQNNVSLSTNSKNYSTDFTKIQSDSSLLQNRQQNHRIETDQLSHFPDHLDPSRIPSPYQPSSLQPLESRKLHSKVDVHSKKLNALSQLNPILRSENVLQNDNHHSSLSMDNDPTNVSTKNRNNQTVGEHPYVDDNKKKKKGPAKPKEKATLGKTVNSFFGSHSTSNYSKVPLSAKLTGEKSDDLSNLLKNKGKKKSQDNQIPHLVGFLGHLSTICKDQYGCRYLQKLLDENPKVNASLFFPEIRQSVVQLMIDPFGNYMCQKLFVYASREQKLSMLNGIGEGIVDICSNLYGTRSMQNIIDKLTSNEQISLLLKIIIPSLTTLACDNNGTHVLQKCIAKFPPEKLEPLFLSMEENLITLATNRHGCCILQRCLDRTNGDIQERLVNSIIKSCLLLVQNAYGNYLVQHVLELNIQPYTERIIEKFFGNICKLSLQKFSSNAIEQCIRTASPSTREQMLQEFLSFPNIEQLLDDCYANYVMQRFLNVADESQKFLILRSISHVIPKIQNTRHGRHILAKLTSSTSS.

3 disordered regions span residues 1 to 29 (MVNRDAYNELNLNKKSQETNRKPSPLSSY), 298 to 330 (LSHFPDHLDPSRIPSPYQPSSLQPLESRKLHSK), and 358 to 411 (NHHS…GKTV). The segment covering 298 to 307 (LSHFPDHLDP) has biased composition (basic and acidic residues). Residues 311-322 (PSPYQPSSLQPL) are compositionally biased toward low complexity. A compositionally biased stretch (polar residues) spans 358–382 (NHHSSLSMDNDPTNVSTKNRNNQTV). A PUM-HD domain is found at 435–778 (EKSDDLSNLL…HILAKLTSST (344 aa)). 9 Pumilio repeats span residues 462–497 (GFLGHLSTICKDQYGCRYLQKLLDENPKVNASLFFP), 498–533 (EIRQSVVQLMIDPFGNYMCQKLFVYASREQKLSMLN), 534–569 (GIGEGIVDICSNLYGTRSMQNIIDKLTSNEQISLLL), 570–606 (KIIIPSLTTLACDNNGTHVLQKCIAKFPPEKLEPLFL), 607–642 (SMEENLITLATNRHGCCILQRCLDRTNGDIQERLVN), 643–678 (SIIKSCLLLVQNAYGNYLVQHVLELNIQPYTERIIE), 679–714 (KFFGNICKLSLQKFSSNAIEQCIRTASPSTREQMLQ), 715–752 (EFLSFPNIEQLLDDCYANYVMQRFLNVADESQKFLILR), and 753–780 (SISHVIPKIQNTRHGRHILAKLTSSTSS).

The sequence is that of Pumilio domain-containing protein C4G8.03c from Schizosaccharomyces pombe (strain 972 / ATCC 24843) (Fission yeast).